Reading from the N-terminus, the 117-residue chain is MKTVILFSFLLVLLGYLGAGHAQRDPEFTSRARQMLAVFGNSEVDRYTKSRNLPALIEFYEKYSSRLPLTVQDRNFANNVVRRYRAQNNQQVDGVPAQGGIGLAFALLLPFAKAIRE.

The first 22 residues, 1–22, serve as a signal peptide directing secretion; that stretch reads MKTVILFSFLLVLLGYLGAGHA.

It belongs to the Turandot family.

Its subcellular location is the secreted. In terms of biological role, a humoral factor that may play a role in stress tolerance. In Drosophila sechellia (Fruit fly), this protein is Protein Turandot F.